The chain runs to 871 residues: Scavenger receptor class F member 2 (871 aa).

The tract at residues 1–20 (MEGAGPRGAGPARRRGAGGP) is disordered. The N-terminal stretch at 1-43 (MEGAGPRGAGPARRRGAGGPPSPLLPSLLLLLLLWMLPDTVAP) is a signal peptide. Topologically, residues 44-441 (QELNPRGRNV…ACHLETNQRK (398 aa)) are extracellular. EGF-like domains are found at residues 71-110 (QGDE…ANCD), 122-153 (CKEL…ARCE), 148-182 (WGAR…AQCA), 183-212 (SACY…RSCN), 213-241 (NQCA…ARCD), and 236-270 (FGAR…KYCR). Disulfide bonds link Cys75–Cys86, Cys80–Cys98, Cys100–Cys109, Cys126–Cys134, Cys128–Cys141, Cys143–Cys152, Cys156–Cys163, Cys158–Cys170, Cys172–Cys181, Cys185–Cys193, Cys187–Cys200, Cys202–Cys211, Cys215–Cys222, Cys217–Cys229, Cys231–Cys240, Cys244–Cys251, Cys246–Cys258, and Cys260–Cys269. Asn83 carries N-linked (GlcNAc...) asparagine glycosylation. N-linked (GlcNAc...) asparagine glycosylation is found at Asn310 and Asn365. The EGF-like 7 domain maps to 372-403 (CAFVCADCGSGHCDFQSGRCLCSPGVHGPHCN). 3 cysteine pairs are disulfide-bonded: Cys376-Cys384, Cys379-Cys391, and Cys393-Cys402. An N-linked (GlcNAc...) asparagine glycan is attached at Asn403. Residues 442-462 (GVMGAGALLVLLVCLLLSLLG) form a helical membrane-spanning segment. Residues 463–871 (CCCACRGKDP…ELGRAGAPTL (409 aa)) lie on the Cytoplasmic side of the membrane. Ser551 is subject to Phosphoserine. Positions 570–579 (EAPAESRDPE) are enriched in basic and acidic residues. Residues 570-871 (EAPAESRDPE…ELGRAGAPTL (302 aa)) form a disordered region. Phosphoserine is present on Ser613. The residue at position 628 (Tyr628) is a Phosphotyrosine. Positions 632-643 (ARREARPARARG) are enriched in basic and acidic residues. 5 positions are modified to phosphoserine: Ser651, Ser653, Ser710, Ser718, and Ser742. Over residues 705-725 (TPSDKSAHTVEHGSPRTRDPT) the composition is skewed to basic and acidic residues. Over residues 821 to 831 (PPATETPGPEK) the composition is skewed to low complexity. Basic residues predominate over residues 844 to 856 (KKTPIQKPPRKKS). Residues 861 to 871 (GELGRAGAPTL) show a composition bias toward low complexity.

In terms of assembly, homophilic and heterophilic interaction via its extracellular domain. Interacts with SCARF1. The heterophilic interaction with SCARF1, which is stronger than the homophilic interaction with itself, is suppressed by the presence of SCARF1 ligand such as Ac-LDL. As to expression, predominantly expressed in endothelial cells. Expressed in heart, placenta, lung, kidney, spleen, small intestine and ovary.

It is found in the membrane. In terms of biological role, probable adhesion protein, which mediates homophilic and heterophilic interactions. In contrast to SCARF1, it poorly mediates the binding and degradation of acetylated low density lipoprotein (Ac-LDL). This is Scavenger receptor class F member 2 (SCARF2) from Homo sapiens (Human).